A 135-amino-acid chain; its full sequence is Ribonuclease P protein component (135 aa).

This sequence belongs to the RnpA family. Consists of a catalytic RNA component (M1 or rnpB) and a protein subunit.

The catalysed reaction is Endonucleolytic cleavage of RNA, removing 5'-extranucleotides from tRNA precursor.. In terms of biological role, RNaseP catalyzes the removal of the 5'-leader sequence from pre-tRNA to produce the mature 5'-terminus. It can also cleave other RNA substrates such as 4.5S RNA. The protein component plays an auxiliary but essential role in vivo by binding to the 5'-leader sequence and broadening the substrate specificity of the ribozyme. In Pseudomonas aeruginosa (strain ATCC 15692 / DSM 22644 / CIP 104116 / JCM 14847 / LMG 12228 / 1C / PRS 101 / PAO1), this protein is Ribonuclease P protein component.